Here is a 368-residue protein sequence, read N- to C-terminus: Cobalt-precorrin-5B C(1)-methyltransferase (368 aa).

It belongs to the CbiD family.

The enzyme catalyses Co-precorrin-5B + S-adenosyl-L-methionine = Co-precorrin-6A + S-adenosyl-L-homocysteine. It functions in the pathway cofactor biosynthesis; adenosylcobalamin biosynthesis; cob(II)yrinate a,c-diamide from sirohydrochlorin (anaerobic route): step 6/10. In terms of biological role, catalyzes the methylation of C-1 in cobalt-precorrin-5B to form cobalt-precorrin-6A. This is Cobalt-precorrin-5B C(1)-methyltransferase from Brucella ovis (strain ATCC 25840 / 63/290 / NCTC 10512).